The sequence spans 419 residues: UDP-N-acetylglucosamine 1-carboxyvinyltransferase 2 (419 aa).

22 to 23 serves as a coordination point for phosphoenolpyruvate; sequence KN. R92 is a UDP-N-acetyl-alpha-D-glucosamine binding site. The active-site Proton donor is C116. The residue at position 116 (C116) is a 2-(S-cysteinyl)pyruvic acid O-phosphothioketal. Residues 121-125, D306, and V328 each bind UDP-N-acetyl-alpha-D-glucosamine; that span reads RPIDL.

Belongs to the EPSP synthase family. MurA subfamily.

Its subcellular location is the cytoplasm. It catalyses the reaction phosphoenolpyruvate + UDP-N-acetyl-alpha-D-glucosamine = UDP-N-acetyl-3-O-(1-carboxyvinyl)-alpha-D-glucosamine + phosphate. The protein operates within cell wall biogenesis; peptidoglycan biosynthesis. In terms of biological role, cell wall formation. Adds enolpyruvyl to UDP-N-acetylglucosamine. This is UDP-N-acetylglucosamine 1-carboxyvinyltransferase 2 from Carboxydothermus hydrogenoformans (strain ATCC BAA-161 / DSM 6008 / Z-2901).